The sequence spans 588 residues: Ufm1-specific protease (588 aa).

Catalysis depends on residues C420, D544, and H546.

This sequence belongs to the peptidase C78 family. Interacts with odr-4.

The protein resides in the endoplasmic reticulum membrane. It is found in the cytoplasm. It localises to the perinuclear region. Its function is as follows. Thiol protease which recognizes and hydrolyzes the peptide bond at the C-terminal Gly of ufm-1, a ubiquitin-like modifier protein bound to a number of target proteins. Required, with oct-4, for the localization of a subset of 7 transmembrane domain odorant receptors, including odr-10, to the cilia of olfactory neurons AWA and AWC. Operates in aggregation behavior, and responses to oxygen levels. In Caenorhabditis briggsae, this protein is Ufm1-specific protease.